The primary structure comprises 119 residues: Anamorsin homolog (119 aa).

Residues 33 to 119 (LKQATKGEDC…KVKLNLTDDI (87 aa)) are disordered. Residues Cys-42, Cys-49, Cys-52, and Cys-54 each coordinate [2Fe-2S] cluster. The interval 42–54 (CTTRRRACKNCVC) is fe-S binding site A. Residues Cys-81, Cys-84, Cys-92, and Cys-95 each coordinate [4Fe-4S] cluster. Short sequence motifs (cx2C motif) lie at residues 81–84 (CGNC) and 92–95 (CANC). The segment at 81–95 (CGNCAKGDAFRCANC) is fe-S binding site B.

It belongs to the anamorsin family. As to quaternary structure, monomer. [2Fe-2S] cluster serves as cofactor. The cofactor is [4Fe-4S] cluster.

Its subcellular location is the cytoplasm. It localises to the mitochondrion intermembrane space. In terms of biological role, component of the cytosolic iron-sulfur (Fe-S) protein assembly (CIA) machinery. Required for the maturation of extramitochondrial Fe-S proteins. Part of an electron transfer chain functioning in an early step of cytosolic Fe-S biogenesis, facilitating the de novo assembly of a [4Fe-4S] cluster on the cytosolic Fe-S scaffold complex. Electrons are transferred from NADPH via a FAD- and FMN-containing diflavin oxidoreductase. Together with the diflavin oxidoreductase, also required for the assembly of the diferric tyrosyl radical cofactor of ribonucleotide reductase (RNR), probably by providing electrons for reduction during radical cofactor maturation in the catalytic small subunit. The chain is Anamorsin homolog from Leishmania braziliensis.